Consider the following 119-residue polypeptide: Large ribosomal subunit protein bL20 (119 aa).

It belongs to the bacterial ribosomal protein bL20 family.

In terms of biological role, binds directly to 23S ribosomal RNA and is necessary for the in vitro assembly process of the 50S ribosomal subunit. It is not involved in the protein synthesizing functions of that subunit. The sequence is that of Large ribosomal subunit protein bL20 from Clostridium beijerinckii (strain ATCC 51743 / NCIMB 8052) (Clostridium acetobutylicum).